A 185-amino-acid chain; its full sequence is Ribosome-recycling factor (185 aa).

The protein belongs to the RRF family.

The protein localises to the cytoplasm. Responsible for the release of ribosomes from messenger RNA at the termination of protein biosynthesis. May increase the efficiency of translation by recycling ribosomes from one round of translation to another. The polypeptide is Ribosome-recycling factor (Photobacterium profundum (strain SS9)).